The following is a 334-amino-acid chain: Endoplasmic reticulum junction formation protein lunapark (334 aa).

Over methionine 1–lysine 40 the chain is Cytoplasmic. Positions aspartate 12–leucine 42 form a coiled coil. A helical transmembrane segment spans residues isoleucine 41 to alanine 61. Residues serine 62–arginine 78 are Lumenal-facing. Residues isoleucine 79–phenylalanine 99 form a helical membrane-spanning segment. Residues phenylalanine 99 to serine 127 adopt a coiled-coil conformation. The Cytoplasmic segment spans residues cysteine 100–lysine 334. A C4-type; plays a role in ER morphology zinc finger spans residues cysteine 201–cysteine 227. Positions lysine 237–valine 315 are disordered. Over residues leucine 239–proline 252 the composition is skewed to polar residues. Residues serine 253–glycine 270 are compositionally biased toward low complexity. Residues isoleucine 273–serine 283 show a composition bias toward polar residues. Serine 284 is modified (phosphoserine). Low complexity predominate over residues alanine 297–valine 315.

The protein belongs to the lunapark family.

The protein localises to the endoplasmic reticulum membrane. It is found in the golgi apparatus membrane. In terms of biological role, plays a role in tubular endoplasmic reticulum network formation and maintenance. The chain is Endoplasmic reticulum junction formation protein lunapark (lnp1) from Schizosaccharomyces pombe (strain 972 / ATCC 24843) (Fission yeast).